Reading from the N-terminus, the 101-residue chain is NAD(P)H-quinone oxidoreductase subunit 4L, chloroplastic (101 aa).

3 helical membrane passes run 2–22 (ILEH…YGLI), 32–52 (MCLE…SDFF), and 61–81 (IFCI…LAIV).

The protein belongs to the complex I subunit 4L family. NDH is composed of at least 16 different subunits, 5 of which are encoded in the nucleus.

It is found in the plastid. It localises to the chloroplast thylakoid membrane. The catalysed reaction is a plastoquinone + NADH + (n+1) H(+)(in) = a plastoquinol + NAD(+) + n H(+)(out). It carries out the reaction a plastoquinone + NADPH + (n+1) H(+)(in) = a plastoquinol + NADP(+) + n H(+)(out). Its function is as follows. NDH shuttles electrons from NAD(P)H:plastoquinone, via FMN and iron-sulfur (Fe-S) centers, to quinones in the photosynthetic chain and possibly in a chloroplast respiratory chain. The immediate electron acceptor for the enzyme in this species is believed to be plastoquinone. Couples the redox reaction to proton translocation, and thus conserves the redox energy in a proton gradient. The polypeptide is NAD(P)H-quinone oxidoreductase subunit 4L, chloroplastic (Crucihimalaya wallichii (Rock-cress)).